Consider the following 363-residue polypeptide: Aminomethyltransferase (363 aa).

It belongs to the GcvT family. As to quaternary structure, the glycine cleavage system is composed of four proteins: P, T, L and H.

It carries out the reaction N(6)-[(R)-S(8)-aminomethyldihydrolipoyl]-L-lysyl-[protein] + (6S)-5,6,7,8-tetrahydrofolate = N(6)-[(R)-dihydrolipoyl]-L-lysyl-[protein] + (6R)-5,10-methylene-5,6,7,8-tetrahydrofolate + NH4(+). Its function is as follows. The glycine cleavage system catalyzes the degradation of glycine. In Staphylococcus aureus (strain MRSA252), this protein is Aminomethyltransferase.